A 1183-amino-acid chain; its full sequence is MAGQFVQYGRHRKRRNYARISEVLELPNLIEIQTKSYDWFLEEGLLEMFRDISPIEDFTGNLSLEFVDYRLGEPKYDLEESKNRDTTYSAPLRVKVRLIIKETGEVKEQEVFMGDFPLMTDTGTFVINGAERVIVSQLVRSPSVYFNEKLDKNGRTNFDATIIPNRGAWLEYETDAKDVVYVRIDRTRKLPLTVLLRALGFSTDQEIVDLLGDNEYLRNTLEKDGTETTDQALLEIYERLRPGEPPTVENAKSLLYSRFFDPKRYDLASVGRYKANKKLHLKHRLFNQKLAEPIVNTETGEIVAEEGTVLDRRNLDEIMDVLEANANSEVFELEGTVIDEPVEIQSIKVYVPNDEEGRTTTVIGNAFPDSEVKCITPADIIASMSYFFNLLSGIGFTDDIDHLGNRRLRSVGELLQNQFRIGLSRMERVVRERMSIQDTDSVTPQQLINIRPVIASIKEFFGSSQLSQFMDQANPLAELTHKRRLSALGPGGLTRERAQMEVRDVHYSHYGRMCPIETPEGPNIGLINSLSSYARVNEFGFIETPYRKVDLETNSITDQIDYLTADEEDSYVVAQANSTLDENGRFIADEVVCRFRGNNTVMAKEKMDYMDVSPKQVVSAATACIPFLENDDSNRALMGANMQRQAVPLMNPESPFVGTGMEHVAARDSGAAIVAKRKGRVEHVESNEILVRQLIEEDGQEYEGELDRYPLAKFKRSNTGTCYNQRPIVASGDVVTKGEILADGPSMELGEMALGRNVVVGFMTWDGYNYEDAVIMSERLVKDDVYTSIHIEEYESEARDTKLGPEEITRDIPNVSDSALKNLDDRGIVYVGAEVNDGDILVGKVTPKGVTELTAEERLLHAIFGEKAREVRDTSLRVPHGAGGIVLDVKVFNREEGDDTLSPGVNQLVRVYIVQKRKIHVGDKMCGRHGNKGVISKLVPEEDMPYLPDGTPIDIMLNPLGVPSRMNIGQVLELHLGMAAKNLGIHVASPVFDGASDEDVWSTIEEAGMARDGKTVLYDGRTGEPFDNRISVGVMYMLKLAHMVDDKLHARSTGPYSLVTQQPLGGKAQFGGQRFGEMEVWALEAYGAAYTLQEILTYKSDDTVGRVKTYESIVKGENITKPGVPESFRVLMKELQSLGLDVKIMDEHDNEIDMQDNEEEDVVERKVDLQQKDAPQSQKEVTD.

Residues 1153 to 1162 show a composition bias toward acidic residues; sequence DMQDNEEEDV. The disordered stretch occupies residues 1153–1183; that stretch reads DMQDNEEEDVVERKVDLQQKDAPQSQKEVTD. Residues 1173–1183 are compositionally biased toward polar residues; the sequence is DAPQSQKEVTD.

It belongs to the RNA polymerase beta chain family. In terms of assembly, the RNAP catalytic core consists of 2 alpha, 1 beta, 1 beta' and 1 omega subunit. When a sigma factor is associated with the core the holoenzyme is formed, which can initiate transcription.

The catalysed reaction is RNA(n) + a ribonucleoside 5'-triphosphate = RNA(n+1) + diphosphate. Its function is as follows. DNA-dependent RNA polymerase catalyzes the transcription of DNA into RNA using the four ribonucleoside triphosphates as substrates. The polypeptide is DNA-directed RNA polymerase subunit beta (Staphylococcus saprophyticus subsp. saprophyticus (strain ATCC 15305 / DSM 20229 / NCIMB 8711 / NCTC 7292 / S-41)).